A 172-amino-acid polypeptide reads, in one-letter code: Small ribosomal subunit protein uS13c (172 aa).

Residues 1-47 (MAHTLATPVAPSVSLICNTKLSVSLSSSSLAFRPVNPKNGGGLSIKC) constitute a chloroplast transit peptide.

Component of the chloroplast small ribosomal subunit (SSU). Mature 70S chloroplast ribosomes of higher plants consist of a small (30S) and a large (50S) subunit. The 30S small subunit contains 1 molecule of ribosomal RNA (16S rRNA) and 24 different proteins. The 50S large subunit contains 3 rRNA molecules (23S, 5S and 4.5S rRNA) and 33 different proteins. uS13c interacts with translation factor pY (PSRP1).

The protein localises to the plastid. The protein resides in the chloroplast. Functionally, component of the chloroplast ribosome (chloro-ribosome), a dedicated translation machinery responsible for the synthesis of chloroplast genome-encoded proteins, including proteins of the transcription and translation machinery and components of the photosynthetic apparatus. This is Small ribosomal subunit protein uS13c (RPS13) from Spinacia oleracea (Spinach).